A 284-amino-acid polypeptide reads, in one-letter code: 3-methyl-2-oxobutanoate hydroxymethyltransferase (284 aa).

Residues Asp-52 and Asp-91 each coordinate Mg(2+). 3-methyl-2-oxobutanoate is bound by residues 52–53, Asp-91, and Lys-121; that span reads DS. A Mg(2+)-binding site is contributed by Glu-123. The active-site Proton acceptor is Glu-191.

This sequence belongs to the PanB family. In terms of assembly, homodecamer; pentamer of dimers. Mg(2+) serves as cofactor.

The protein resides in the cytoplasm. It catalyses the reaction 3-methyl-2-oxobutanoate + (6R)-5,10-methylene-5,6,7,8-tetrahydrofolate + H2O = 2-dehydropantoate + (6S)-5,6,7,8-tetrahydrofolate. It participates in cofactor biosynthesis; (R)-pantothenate biosynthesis; (R)-pantoate from 3-methyl-2-oxobutanoate: step 1/2. Functionally, catalyzes the reversible reaction in which hydroxymethyl group from 5,10-methylenetetrahydrofolate is transferred onto alpha-ketoisovalerate to form ketopantoate. The polypeptide is 3-methyl-2-oxobutanoate hydroxymethyltransferase (Deinococcus radiodurans (strain ATCC 13939 / DSM 20539 / JCM 16871 / CCUG 27074 / LMG 4051 / NBRC 15346 / NCIMB 9279 / VKM B-1422 / R1)).